The chain runs to 464 residues: NADH dehydrogenase [ubiquinone] flavoprotein 1, mitochondrial (464 aa).

The transit peptide at 1 to 20 (MLAARRLLGGSLPSRVSVRF) directs the protein to the mitochondrion. N6-acetyllysine; alternate is present on Lys81. An N6-succinyllysine; alternate modification is found at Lys81. 87 to 96 (GRGGAGFPTG) serves as a coordination point for NADH. Residue Lys104 is modified to N6-acetyllysine. 199 to 247 (RGAGAYICGEETALIESIEGKQGKPRLKPPFPADVGVFGCPTTVANVET) lines the FMN pocket. Arg257 is subject to Omega-N-methylarginine. Lys375 is subject to N6-acetyllysine. The [4Fe-4S] cluster site is built by Cys379, Cys382, Cys385, and Cys425.

This sequence belongs to the complex I 51 kDa subunit family. Core subunit of respiratory chain NADH dehydrogenase (Complex I) which is composed of 45 different subunits. This is a component of the flavoprotein-sulfur (FP) fragment of the enzyme. Interacts with RAB5IF. Requires FMN as cofactor. [4Fe-4S] cluster serves as cofactor.

The protein localises to the mitochondrion inner membrane. It carries out the reaction a ubiquinone + NADH + 5 H(+)(in) = a ubiquinol + NAD(+) + 4 H(+)(out). Core subunit of the mitochondrial membrane respiratory chain NADH dehydrogenase (Complex I) which catalyzes electron transfer from NADH through the respiratory chain, using ubiquinone as an electron acceptor. Part of the peripheral arm of the enzyme, where the electrons from NADH are accepted by flavin mononucleotide (FMN) and then passed along a chain of iron-sulfur clusters by electron tunnelling to the final acceptor ubiquinone. Contains FMN, which is the initial electron acceptor as well as one iron-sulfur cluster. This chain is NADH dehydrogenase [ubiquinone] flavoprotein 1, mitochondrial, found in Macaca fascicularis (Crab-eating macaque).